Here is a 220-residue protein sequence, read N- to C-terminus: Probable cutinase 5 (220 aa).

The signal sequence occupies residues 1–18 (MVALHTLLLTAFAAVSLA). 2 cysteine pairs are disulfide-bonded: Cys42–Cys121 and Cys68–Cys82. Catalysis depends on Ser132, which acts as the Nucleophile. Cys183 and Cys190 are disulfide-bonded. Asp187 is a catalytic residue. Catalysis depends on His200, which acts as the Proton donor/acceptor.

This sequence belongs to the cutinase family.

It is found in the secreted. It carries out the reaction cutin + H2O = cutin monomers.. Functionally, catalyzes the hydrolysis of complex carboxylic polyesters found in the cell wall of plants. Degrades cutin, a macromolecule that forms the structure of the plant cuticle. The sequence is that of Probable cutinase 5 from Aspergillus terreus (strain NIH 2624 / FGSC A1156).